Consider the following 376-residue polypeptide: MQWASVLLLAGLCSLSQGQYDEDSHWWIQYLRNQQSTYYDPYDPYPYEPSEPYPYGVEEGPAYAYGAPPPPEPRDCPQECDCPPNFPTAMYCDNRNLKYLPFVPSRMKYVYFQNNQISAIQEGVFDNATGLLWVALHGNQITSDKVGRKVFSKLRHLERLYLDHNNLTRMPGPLPRSLRELHLDHNQISRVPNNALEGLENLTALYLHHNEIQEVGSSMRGLRSLILLDLSYNHLRRVPDGLPSALEQLYLEHNNVYTVPDSYFRGSPKLLYVRLSHNSLTNNGLATNTFNSSSLLELDLSYNQLQKIPPVNTNLENLYLQGNRINEFSISSFCTVVDVMNFSKLQVLRLDGNEIKRSAMPVDAPLCLRLANLIEI.

The N-terminal stretch at Met1–Gly18 is a signal peptide. Pyrrolidone carboxylic acid is present on Gln19. 6 positions are modified to sulfotyrosine: Tyr20, Tyr38, Tyr53, Tyr55, Tyr63, and Tyr65. The LRRNT domain occupies Ala67–Ser105. LRR repeat units lie at residues Arg106–Asn127, Gly130–Phe151, His156–Arg176, Ser177–Gly198, Asn201–Leu222, Ser224–Ala245, Leu246–Gly266, and Lys269–Thr289. Asn127 is a glycosylation site (N-linked (GlcNAc...) (keratan sulfate) asparagine). Residue Asn166 is glycosylated (N-linked (GlcNAc...) (keratan sulfate) asparagine). N-linked (GlcNAc...) (keratan sulfate) asparagine glycosylation occurs at Asn201. The N-linked (GlcNAc...) (keratan sulfate) asparagine glycan is linked to Asn291. LRR repeat units follow at residues Ser294–Leu315 and Glu316–Thr335. Cysteines 334 and 367 form a disulfide. Asn341 carries an N-linked (GlcNAc...) asparagine glycan. The stretch at Lys344–Cys367 is one LRR 11 repeat.

Belongs to the small leucine-rich proteoglycan (SLRP) family. SLRP class II subfamily. As to quaternary structure, binds to type I and type II collagen. Post-translationally, binds keratan sulfate chains. Sulfated on tyrosine residue(s). As to expression, highest levels observed in knee epiphysis, in calvarial and diaphyseal bone, in nasal and costal cartilage, in the eye, and in bladder. In mature knee joint it is mostly present in the proliferating zone of growth plate. It is also observed in ligaments, especially at insertion sites, in the junction between meniscus and joint capsule, in the perimysium of skeletal muscle and in the periosteum.

It is found in the secreted. Its subcellular location is the extracellular space. The protein resides in the extracellular matrix. In terms of biological role, affects the rate of fibrils formation. May have a primary role in collagen fibrillogenesis. The sequence is that of Fibromodulin (Fmod) from Mus musculus (Mouse).